The following is a 424-amino-acid chain: STAM-binding protein (424 aa).

The interval 1 to 127 (MSDHGDVSLP…YEQYKERKKK (127 aa)) is interaction with CHMP3. Residues Ser2 and Ser48 each carry the phosphoserine modification. Residues 227–231 (PAKPP) are interaction with STAM. Ser243 is modified (phosphoserine). An MPN domain is found at 257–388 (IVVPRNLCSE…LTDYGLQEIS (132 aa)). Zn(2+)-binding residues include His335, His337, Asp348, His350, Cys390, His396, and His398. Residues 335 to 348 (HTHPTQTAFLSSVD) carry the JAMM motif motif.

This sequence belongs to the peptidase M67C family. As to quaternary structure, interacts with STAM. Interacts with SMAD6 and SMAD7. Interacts with CHMP3; the interaction appears to relieve the autoinhibition of CHMP3. Interacts with SMURF2 and RNF11; this interaction promotes ubiquitination. Requires Zn(2+) as cofactor. In terms of processing, phosphorylated after BMP type I receptor activation. Ubiquitinated by SMURF2 in the presence of RNF11. Expressed in brain.

It is found in the nucleus. The protein resides in the membrane. It localises to the cytoplasm. Its subcellular location is the early endosome. With respect to regulation, inhibited by N-ethylmaleimide. Zinc metalloprotease that specifically cleaves 'Lys-63'-linked polyubiquitin chains. Does not cleave 'Lys-48'-linked polyubiquitin chains. Plays a role in signal transduction for cell growth and MYC induction mediated by IL-2 and GM-CSF. Potentiates BMP (bone morphogenetic protein) signaling by antagonizing the inhibitory action of SMAD6 and SMAD7. Has a key role in regulation of cell surface receptor-mediated endocytosis and ubiquitin-dependent sorting of receptors to lysosomes. Endosomal localization of STAMBP is required for efficient EGFR degradation but not for its internalization. Involved in the negative regulation of PI3K-AKT-mTOR and RAS-MAP signaling pathways. This Mus musculus (Mouse) protein is STAM-binding protein (Stambp).